Here is a 71-residue protein sequence, read N- to C-terminus: Protein SlyX homolog (71 aa).

This sequence belongs to the SlyX family.

The sequence is that of Protein SlyX homolog from Azotobacter vinelandii (strain DJ / ATCC BAA-1303).